We begin with the raw amino-acid sequence, 23 residues long: Basic phospholipase A2 intermexin (23 aa).

It belongs to the phospholipase A2 family. Group II subfamily. Ca(2+) is required as a cofactor. Post-translationally, contains 7 disulfide bonds. In terms of tissue distribution, expressed by the venom gland.

Its subcellular location is the secreted. The catalysed reaction is a 1,2-diacyl-sn-glycero-3-phosphocholine + H2O = a 1-acyl-sn-glycero-3-phosphocholine + a fatty acid + H(+). Its function is as follows. Snake venom phospholipase A2 (PLA2) that shows presynaptic neurotoxicity and low myotoxicity. PLA2 catalyzes the calcium-dependent hydrolysis of the 2-acyl groups in 3-sn-phosphoglycerides. This chain is Basic phospholipase A2 intermexin, found in Gloydius intermedius (Central Asian pit viper).